The sequence spans 465 residues: Phytase A (465 aa).

The signal sequence occupies residues M1 to G26. A disulfide bridge connects residues C30 and C39. Positions 49, 50, 80, 81, 84, and 87 each coordinate 1D-myo-inositol hexakisphosphate. 4 disulfide bridges follow: C70–C412, C213–C463, C262–C280, and C434–C442. H81 functions as the Nucleophile in the catalytic mechanism. The N-linked (GlcNAc...) asparagine glycan is linked to N104. A 1D-myo-inositol hexakisphosphate-binding site is contributed by R164. An N-linked (GlcNAc...) asparagine glycan is attached at N205. D209 is a 1D-myo-inositol hexakisphosphate binding site. An N-linked (GlcNAc...) asparagine glycan is attached at N228. Residue K299 participates in 1D-myo-inositol hexakisphosphate binding. N-linked (GlcNAc...) asparagine glycosylation is found at N337 and N350. H359 and D360 together coordinate 1D-myo-inositol hexakisphosphate. An N-linked (GlcNAc...) asparagine glycan is attached at N374.

This sequence belongs to the histidine acid phosphatase family. As to quaternary structure, monomer.

It is found in the secreted. The catalysed reaction is 1D-myo-inositol hexakisphosphate + H2O = 1D-myo-inositol 1,2,4,5,6-pentakisphosphate + phosphate. The enzyme catalyses 1D-myo-inositol 1,2,4,5,6-pentakisphosphate + H2O = 1D-myo-inositol 1,2,5,6-tetrakisphosphate + phosphate. It catalyses the reaction 1D-myo-inositol 1,2,5,6-tetrakisphosphate + H2O = 1D-myo-inositol 1,2,6-trisphosphate + phosphate. It carries out the reaction 1D-myo-inositol 1,2,6-trisphosphate + H2O = 1D-myo-inositol 1,2-bisphosphate + phosphate. The catalysed reaction is 1D-myo-inositol 1,2-bisphosphate + H2O = 1D-myo-inositol 2-phosphate + phosphate. Its function is as follows. Catalyzes the phosphate monoester hydrolysis of phytic acid (myo-inositol hexakisphosphate), which results in the stepwise formation of myo-inositol pentakis-, tetrakis-, tris-, bis-, and monophosphates, as well as the liberation of inorganic phosphate. Myo-inositol 2-monophosphate is the end product. Has a broad substrate specificity and is also able to dephosphorylate other classic acid phosphatase substrates such as p-nitrophenyl phosphate, phenyl phosphate, fructose 1,6-bisphosphate, fructose 6-phosphate, glucose 6-phosphate, ribose 5-phosphate, alpha-glycerophosphate, beta-glycerophosphate, 3-phosphoglycerate, phosphoenolpyruvate, as well as ADP and ATP. This Aspergillus fumigatus (strain ATCC MYA-4609 / CBS 101355 / FGSC A1100 / Af293) (Neosartorya fumigata) protein is Phytase A (phyA).